Consider the following 127-residue polypeptide: Fumarate reductase subunit C (127 aa).

Helical transmembrane passes span Ala-30–Val-50, Ile-67–Phe-87, and Val-107–Val-127.

This sequence belongs to the FrdC family. Part of an enzyme complex containing four subunits: a flavoprotein (FrdA), an iron-sulfur protein (FrdB), and two hydrophobic anchor proteins (FrdC and FrdD).

Its subcellular location is the cell inner membrane. Anchors the catalytic components of the fumarate reductase complex to the cell membrane, binds quinones. In Aliivibrio fischeri (strain ATCC 700601 / ES114) (Vibrio fischeri), this protein is Fumarate reductase subunit C.